The chain runs to 179 residues: Shikimate kinase (179 aa).

11–16 (GAGKTT) is an ATP binding site. Residue T15 participates in Mg(2+) binding. Residues D33, R57, and G79 each contribute to the substrate site. An ATP-binding site is contributed by R118. R140 contacts substrate.

This sequence belongs to the shikimate kinase family. In terms of assembly, monomer. It depends on Mg(2+) as a cofactor.

The protein localises to the cytoplasm. The catalysed reaction is shikimate + ATP = 3-phosphoshikimate + ADP + H(+). Its pathway is metabolic intermediate biosynthesis; chorismate biosynthesis; chorismate from D-erythrose 4-phosphate and phosphoenolpyruvate: step 5/7. In terms of biological role, catalyzes the specific phosphorylation of the 3-hydroxyl group of shikimic acid using ATP as a cosubstrate. This is Shikimate kinase from Bacteroides fragilis (strain ATCC 25285 / DSM 2151 / CCUG 4856 / JCM 11019 / LMG 10263 / NCTC 9343 / Onslow / VPI 2553 / EN-2).